The chain runs to 234 residues: Cell adhesion molecule CEACAM15 (234 aa).

The signal sequence occupies residues 1–32; that stretch reads MGAETMESPSLFLCKGLLLTASLLICWNWSTA. N-linked (GlcNAc...) asparagine glycosylation is found at N28, N75, N151, and N184. One can recognise an Ig-like C2-type domain in the interval 146 to 226; that stretch reads PYLQLNHTRL…NSFSSKKSYP (81 aa). A disulfide bond links C165 and C213.

The protein belongs to the immunoglobulin superfamily. CEA family. In terms of tissue distribution, detected in placenta.

This Mus musculus (Mouse) protein is Cell adhesion molecule CEACAM15.